The following is a 368-amino-acid chain: UV excision repair protein rhp23 (368 aa).

The Ubiquitin-like domain occupies 1–77 (MNLTFKNLQQ…IVCMVSRPKT (77 aa)). Low complexity-rich tracts occupy residues 76-88 (KTSTSTPKSAASP) and 103-124 (APSSTVAESTSTTQTVAAAAPS). A disordered region spans residues 76–134 (KTSTSTPKSAASPAPNPPASVPEKKVEAPSSTVAESTSTTQTVAAAAPSNPDTTATSEA). Phosphoserine is present on residues serine 84 and serine 87. UBA domains follow at residues 135-185 (PIDA…LLTG) and 320-360 (QEES…LFEH). The residue at position 364 (serine 364) is a Phosphoserine.

Its subcellular location is the nucleus. In terms of biological role, involved in postreplication repair of UV-damaged DNA. Postreplication repair functions in gap-filling of a daughter strand on replication of damaged DNA. Protects ubiquitin chains against dissambly by deubiquitinating enzymes thereby promoting protein degradation. This chain is UV excision repair protein rhp23 (rhp23), found in Schizosaccharomyces pombe (strain 972 / ATCC 24843) (Fission yeast).